We begin with the raw amino-acid sequence, 347 residues long: DNA-directed RNA polymerase subunit alpha (347 aa).

Positions 1–226 (MLISQRPTLS…ELFGLARELN (226 aa)) are alpha N-terminal domain (alpha-NTD). Residues 243 to 347 (HIASFALPID…SQDYAETEQL (105 aa)) are alpha C-terminal domain (alpha-CTD). Residues 326-347 (TTGTWSTDGAYDSQDYAETEQL) are disordered.

This sequence belongs to the RNA polymerase alpha chain family. In terms of assembly, homodimer. The RNAP catalytic core consists of 2 alpha, 1 beta, 1 beta' and 1 omega subunit. When a sigma factor is associated with the core the holoenzyme is formed, which can initiate transcription.

The catalysed reaction is RNA(n) + a ribonucleoside 5'-triphosphate = RNA(n+1) + diphosphate. In terms of biological role, DNA-dependent RNA polymerase catalyzes the transcription of DNA into RNA using the four ribonucleoside triphosphates as substrates. The chain is DNA-directed RNA polymerase subunit alpha from Mycobacterium leprae (strain TN).